The sequence spans 94 residues: Large ribosomal subunit protein bL28 (94 aa).

Belongs to the bacterial ribosomal protein bL28 family.

This Hyphomonas neptunium (strain ATCC 15444) protein is Large ribosomal subunit protein bL28.